A 426-amino-acid chain; its full sequence is Homeobox protein knotted-1-like LET12 (426 aa).

3 disordered regions span residues 1 to 26, 85 to 158, and 270 to 290; these read MEFQDHFSQEMVLHQQQQQQQQQQNA, QTSN…ENSW, and GVAPGEGTGATMSDDDDDQAD. Positions 15 to 24 are enriched in low complexity; sequence QQQQQQQQQQ. The span at 104 to 114 shows a compositional bias: gly residues; it reads AGGGSNGGGSG. Over residues 139–151 the composition is skewed to low complexity; the sequence is ENNNNNNNNNNNN. The ELK domain occupies 327–347; sequence ELKHELKQGYKEKIVDIREEI. Residues 348–411 constitute a DNA-binding region (homeobox; TALE-type); the sequence is LRKRRAGKLP…NQRKRNWHSN (64 aa). The disordered stretch occupies residues 406–426; the sequence is RNWHSNPSTSSSQKSQTQECR. The segment covering 413 to 426 has biased composition (low complexity); the sequence is STSSSQKSQTQECR.

The protein belongs to the TALE/KNOX homeobox family. Ubiquitously expressed in the mature plant.

The protein resides in the nucleus. Functionally, may have a role to play in formative events in ovule and embryo morphogenesis. The sequence is that of Homeobox protein knotted-1-like LET12 (LET12) from Solanum lycopersicum (Tomato).